We begin with the raw amino-acid sequence, 116 residues long: Tyrosine-protein phosphatase 10 (116 aa).

Positions 1–116 constitute a Tyrosine-protein phosphatase domain; the sequence is WRMVWEQNVS…SPTGYGPIVV (116 aa). Residue aspartate 86 coordinates substrate.

This sequence belongs to the protein-tyrosine phosphatase family.

It catalyses the reaction O-phospho-L-tyrosyl-[protein] + H2O = L-tyrosyl-[protein] + phosphate. This Styela plicata (Wrinkled sea squirt) protein is Tyrosine-protein phosphatase 10 (STY-10).